A 234-amino-acid chain; its full sequence is STARD3 N-terminal-like protein (234 aa).

M1 bears the N-acetylmethionine mark. The Cytoplasmic segment spans residues 1 to 53 (MNHLPEDMENALTGSQSSHASLRNIHSINPTQLMARIESYEGREKKGISDVRR). A phosphoserine mark is found at S15, S21, and S27. In terms of domain architecture, MENTAL spans 48–218 (ISDVRRTFCL…YSPPESEAGS (171 aa)). Residues 54–74 (TFCLFVTFDLLFVTLLWIIEL) form a helical membrane-spanning segment. Over 75–97 (NVNGGIENTLEKEVMQYDYYSSY) the chain is Extracellular. Residues 98 to 118 (FDIFLLAVFRFKVLILAYAVC) traverse the membrane as a helical segment. Residues 119–122 (RLRH) are Cytoplasmic-facing. The helical transmembrane segment at 123–143 (WWAIALTTAVTSAFLLAKVIL) threads the bilayer. Topologically, residues 144–150 (SKLFSQG) are extracellular. A helical membrane pass occupies residues 151–171 (AFGYVLPIISFILAWIETWFL). Residues 172–234 (DFKVLPQEAE…QDSEKPLLEL (63 aa)) lie on the Cytoplasmic side of the membrane. The residue at position 193 (S193) is a Phosphoserine. Residues 200-234 (PGGLSDGQFYSPPESEAGSEEAEEKQDSEKPLLEL) form a disordered region. Residues 208 to 213 (FYSPPE) carry the FFAT motif. The segment covering 224–234 (KQDSEKPLLEL) has biased composition (basic and acidic residues).

This sequence belongs to the STARD3 family. Homodimer. Interacts (via the MENTAL domain) with STARD3NL. Interacts (via FFAT motif) with VAPA. Interacts (via FFAT motif) with VAPB. Interacts (via FFAT motif) with MOSPD2 (via MSP domain).

The protein resides in the late endosome membrane. Tethering protein that creates contact site between the endoplasmic reticulum and late endosomes: localizes to late endosome membranes and contacts the endoplasmic reticulum via interaction with VAPA and VAPB. This Homo sapiens (Human) protein is STARD3 N-terminal-like protein.